We begin with the raw amino-acid sequence, 273 residues long: Rhamnulose-1-phosphate aldolase (273 aa).

Residue E117 is part of the active site. Zn(2+)-binding residues include H140, H142, and H211.

This sequence belongs to the aldolase class II family. RhaD subfamily. Requires Zn(2+) as cofactor.

The protein resides in the cytoplasm. The catalysed reaction is L-rhamnulose 1-phosphate = (S)-lactaldehyde + dihydroxyacetone phosphate. The protein operates within carbohydrate degradation; L-rhamnose degradation; glycerone phosphate from L-rhamnose: step 3/3. Its function is as follows. Catalyzes the reversible cleavage of L-rhamnulose-1-phosphate to dihydroxyacetone phosphate (DHAP) and L-lactaldehyde. The chain is Rhamnulose-1-phosphate aldolase from Listeria monocytogenes serovar 1/2a (strain ATCC BAA-679 / EGD-e).